A 548-amino-acid polypeptide reads, in one-letter code: Membrane protein insertase YidC (548 aa).

A helical transmembrane segment spans residues asparagine 6–aspartate 26. Residues asparagine 28 to serine 55 form a disordered region. Low complexity predominate over residues glutamine 30–glutamine 50. 4 consecutive transmembrane segments (helical) span residues phenylalanine 350 to tyrosine 370, leucine 420 to leucine 440, leucine 458 to isoleucine 478, and proline 499 to valine 519.

The protein belongs to the OXA1/ALB3/YidC family. Type 1 subfamily. As to quaternary structure, interacts with the Sec translocase complex via SecD. Specifically interacts with transmembrane segments of nascent integral membrane proteins during membrane integration.

It localises to the cell inner membrane. Functionally, required for the insertion and/or proper folding and/or complex formation of integral membrane proteins into the membrane. Involved in integration of membrane proteins that insert both dependently and independently of the Sec translocase complex, as well as at least some lipoproteins. Aids folding of multispanning membrane proteins. The chain is Membrane protein insertase YidC from Escherichia coli (strain K12 / MC4100 / BW2952).